Consider the following 476-residue polypeptide: Vitamin D-binding protein (476 aa).

The N-terminal stretch at 1–16 (MKRVLVLLLALAFGHA) is a signal peptide. Albumin domains lie at 17-208 (LERG…QMKQ), 209-394 (LLLL…LMKR), and 395-476 (QLTS…ILQS). 14 cysteine pairs are disulfide-bonded: C29–C75, C74–C83, C96–C112, C111–C122, C145–C190, C189–C198, C220–C266, C265–C273, C286–C300, C299–C311, C335–C376, C375–C384, C407–C453, and C452–C462. N288 carries N-linked (GlcNAc...) asparagine glycosylation. The residue at position 434 (S434) is a Phosphoserine.

The protein belongs to the ALB/AFP/VDB family. As to quaternary structure, associates with membrane-bound immunoglobulin on the surface of B-lymphocytes and with IgG Fc receptor on the membranes of T-lymphocytes. Interacts with LRP2; the interaction is required for renal uptake of GC in complex with 25-hydroxyvitamin D3.

Its subcellular location is the secreted. In terms of biological role, involved in vitamin D transport and storage, scavenging of extracellular G-actin, enhancement of the chemotactic activity of C5 alpha for neutrophils in inflammation and macrophage activation. This Rattus norvegicus (Rat) protein is Vitamin D-binding protein (Gc).